We begin with the raw amino-acid sequence, 80 residues long: Raniseptin-5 (80 aa).

The first 22 residues, M1–C22, serve as a signal peptide directing secretion. The propeptide occupies E23–E49.

The protein belongs to the frog skin active peptide (FSAP) family. Dermaseptin subfamily. As to expression, expressed by the skin glands.

It is found in the secreted. Functionally, has antibacterial activity. The protein is Raniseptin-5 of Boana raniceps (Chaco tree frog).